The following is a 63-amino-acid chain: GDDVKSACCDTCLCTKSEPPTCRCVDVGERCHSACNSCVCRYSNPPKCQCFDTHKFCYKSCHN.

Disulfide bonds link cysteine 8/cysteine 61, cysteine 9/cysteine 24, cysteine 12/cysteine 57, cysteine 14/cysteine 22, cysteine 31/cysteine 38, cysteine 35/cysteine 50, and cysteine 40/cysteine 48.

Belongs to the Bowman-Birk serine protease inhibitor family.

Functionally, this inhibitor has two domains, each with separate antiprotease activity. Inhibits bovine trypsin and chymotrypsin, in a molar ratio of 1:1. The trypsin inhibition of FBI is independent of chymotrypsin inhibition, but the chymotrypsin inhibition is not completely independent of trypsin inhibition. This is Bowman-Birk type proteinase inhibitor from Vicia faba (Broad bean).